A 68-amino-acid chain; its full sequence is Conotoxin mr3g (68 aa).

The signal sequence occupies residues 1 to 19 (MSKLGVLLTICLLLFALTA). A propeptide spanning residues 20–51 (VPLDGDQPADRPAERMQDDISSERHPMFDAVR) is cleaved from the precursor. Disulfide bonds link Cys53-Cys67, Cys54-Cys63, and Cys59-Cys66. A 4-hydroxyproline mark is found at Pro55 and Pro65. Cys67 carries the post-translational modification Cysteine amide.

Expressed by the venom duct.

The protein resides in the secreted. In terms of biological role, intracranially injection into mice does not elicit symptoms. This Conus marmoreus (Marble cone) protein is Conotoxin mr3g.